A 467-amino-acid chain; its full sequence is 6-phospho-beta-galactosidase (467 aa).

D-galactose 6-phosphate contacts are provided by Gln19, His116, Asn159, Glu160, and Asn297. Catalysis depends on Glu160, which acts as the Proton donor. The active-site Nucleophile is the Glu375. The D-galactose 6-phosphate site is built by Ser428, Trp429, Lys435, and Tyr437.

This sequence belongs to the glycosyl hydrolase 1 family.

The catalysed reaction is a 6-phospho-beta-D-galactoside + H2O = D-galactose 6-phosphate + an alcohol. It participates in carbohydrate metabolism; lactose degradation; D-galactose 6-phosphate and beta-D-glucose from lactose 6-phosphate: step 1/1. With respect to regulation, inhibited by both galactose-6-phosphate and ATP. This Leptotrichia buccalis (strain ATCC 14201 / DSM 1135 / JCM 12969 / NCTC 10249 / C-1013-b) protein is 6-phospho-beta-galactosidase.